We begin with the raw amino-acid sequence, 188 residues long: Elongation factor P (188 aa).

Position 34 is an N6-(3,6-diaminohexanoyl)-5-hydroxylysine (Lys34).

This sequence belongs to the elongation factor P family. Post-translationally, may be beta-lysylated on the epsilon-amino group of Lys-34 by the combined action of EpmA and EpmB, and then hydroxylated on the C5 position of the same residue by EpmC (if this protein is present). Lysylation is critical for the stimulatory effect of EF-P on peptide-bond formation. The lysylation moiety may extend toward the peptidyltransferase center and stabilize the terminal 3-CCA end of the tRNA. Hydroxylation of the C5 position on Lys-34 may allow additional potential stabilizing hydrogen-bond interactions with the P-tRNA.

The protein localises to the cytoplasm. It participates in protein biosynthesis; polypeptide chain elongation. Functionally, involved in peptide bond synthesis. Alleviates ribosome stalling that occurs when 3 or more consecutive Pro residues or the sequence PPG is present in a protein, possibly by augmenting the peptidyl transferase activity of the ribosome. Modification of Lys-34 is required for alleviation. The chain is Elongation factor P from Sodalis glossinidius (strain morsitans).